We begin with the raw amino-acid sequence, 200 residues long: Large ribosomal subunit protein uL4 (200 aa).

A disordered region spans residues 42–65 (TRAHKSRADVSGGGKKPFRQKGTG).

The protein belongs to the universal ribosomal protein uL4 family. In terms of assembly, part of the 50S ribosomal subunit.

Its function is as follows. One of the primary rRNA binding proteins, this protein initially binds near the 5'-end of the 23S rRNA. It is important during the early stages of 50S assembly. It makes multiple contacts with different domains of the 23S rRNA in the assembled 50S subunit and ribosome. Forms part of the polypeptide exit tunnel. The chain is Large ribosomal subunit protein uL4 from Acinetobacter baumannii (strain AB307-0294).